The chain runs to 420 residues: MIFDQEDYKAFDPEIWEAVAKEEERQQHNIELIASENVVSKAVMAAQGSILTNKYAEGYPGRRYYGGTDVVDVIESLAIERAKEIFGAKFANVQPHSGSQANCAAYMALIEPGDTVMGMDLSAGGHLTHGASVSFSGQTYNFVSYSVDPETELLDFDAILKQAKEVQPKLIVAGASAYSHIIDFSKFREIADAVGAKLMVDMAHIAGLVAAGLHPSPVPYADITTTTTHKTLRGPRGGLILTNDEDLAKKINSAIFPGIQGGPLEHVIAAKAVAFKEVLDPAFKVYAQQILDNAQAMAQVFRQHDKFRVISDGTENHLFLVDVTKVVENGKVAQNLLDEVNITLNKNSIPYETLSPFKTSGIRIGTAAIAARGFGVTESIKVAELIIKALENAENEAVLNQVRAEVRELTDAFPLYEGLN.

Residues leucine 121 and 125-127 (GHL) each bind (6S)-5,6,7,8-tetrahydrofolate. Lysine 230 is subject to N6-(pyridoxal phosphate)lysine. Residue 355-357 (SPF) coordinates (6S)-5,6,7,8-tetrahydrofolate.

The protein belongs to the SHMT family. As to quaternary structure, homodimer. The cofactor is pyridoxal 5'-phosphate.

The protein localises to the cytoplasm. It carries out the reaction (6R)-5,10-methylene-5,6,7,8-tetrahydrofolate + glycine + H2O = (6S)-5,6,7,8-tetrahydrofolate + L-serine. Its pathway is one-carbon metabolism; tetrahydrofolate interconversion. The protein operates within amino-acid biosynthesis; glycine biosynthesis; glycine from L-serine: step 1/1. Its function is as follows. Catalyzes the reversible interconversion of serine and glycine with tetrahydrofolate (THF) serving as the one-carbon carrier. This reaction serves as the major source of one-carbon groups required for the biosynthesis of purines, thymidylate, methionine, and other important biomolecules. Also exhibits THF-independent aldolase activity toward beta-hydroxyamino acids, producing glycine and aldehydes, via a retro-aldol mechanism. This Streptococcus gordonii (strain Challis / ATCC 35105 / BCRC 15272 / CH1 / DL1 / V288) protein is Serine hydroxymethyltransferase.